The sequence spans 35 residues: MSDIN-like toxin proprotein 6 (35 aa).

A propeptide spanning residues 1 to 10 (MSDINGTRLP) is cleaved from the precursor. A cross-link (cyclopeptide (Ile-Pro)) is located at residues 11 to 20 (IPGLIPLGIP). Positions 21-35 (CVSDDVNPTLTRGER) are excised as a propeptide.

The protein belongs to the MSDIN fungal toxin family. Post-translationally, processed by the macrocyclase-peptidase enzyme POPB to yield a toxic cyclic decapeptide. POPB first removes 10 residues from the N-terminus. Conformational trapping of the remaining peptide forces the enzyme to release this intermediate rather than proceed to macrocyclization. The enzyme rebinds the remaining peptide in a different conformation and catalyzes macrocyclization of the N-terminal 10 residues.

In terms of biological role, probable toxin that belongs to the MSDIN-like toxin family responsible for a large number of food poisoning cases and deaths. The protein is MSDIN-like toxin proprotein 6 of Amanita bisporigera (Destroying angel).